The sequence spans 440 residues: Phosphatidylcholine-sterol acyltransferase (440 aa).

An N-terminal signal peptide occupies residues 1-24; that stretch reads MGLPGSPWQWVLLLLGLLLPPATS. N-linked (GlcNAc...) asparagine glycosylation occurs at Asn-44. Cys-74 and Cys-98 are disulfide-bonded. The N-linked (GlcNAc...) asparagine glycan is linked to Asn-108. Ser-205 acts as the Nucleophile in catalysis. N-linked (GlcNAc...) asparagine glycosylation is present at Asn-296. Cys-337 and Cys-380 are oxidised to a cystine. The active-site Charge relay system is Asp-369. N-linked (GlcNAc...) asparagine glycosylation occurs at Asn-397. His-401 (charge relay system) is an active-site residue. Asn-408 carries an N-linked (GlcNAc...) asparagine glycan.

This sequence belongs to the AB hydrolase superfamily. Lipase family. Detected in blood plasma (at protein level).

It is found in the secreted. The enzyme catalyses a sterol + a 1,2-diacyl-sn-glycero-3-phosphocholine = a sterol ester + a 1-acyl-sn-glycero-3-phosphocholine. It carries out the reaction a 1-O-alkyl-2-acetyl-sn-glycero-3-phosphocholine + H2O = a 1-O-alkyl-sn-glycero-3-phosphocholine + acetate + H(+). It catalyses the reaction 1-hexadecanoyl-2-(9Z,12Z-octadecadienoyl)-sn-glycero-3-phosphocholine + H2O = (9Z,12Z)-octadecadienoate + 1-hexadecanoyl-sn-glycero-3-phosphocholine + H(+). The catalysed reaction is 1-hexadecanoyl-2-(5Z,8Z,11Z,14Z-eicosatetraenoyl)-sn-glycero-3-phosphocholine + H2O = 1-hexadecanoyl-sn-glycero-3-phosphocholine + (5Z,8Z,11Z,14Z)-eicosatetraenoate + H(+). The enzyme catalyses 1-hexadecanoyl-2-(5Z,8Z,11Z,14Z-eicosatetraenoyl)-sn-glycero-3-phosphocholine + cholesterol = cholesteryl (5Z,8Z,11Z,14Z)-eicosatetraenoate + 1-hexadecanoyl-sn-glycero-3-phosphocholine. It carries out the reaction 1-hexadecanoyl-2-(9Z-octadecenoyl)-sn-glycero-3-phosphocholine + cholesterol = cholesteryl (9Z-octadecenoate) + 1-hexadecanoyl-sn-glycero-3-phosphocholine. It catalyses the reaction a 1-hexadecanoyl-2-acyl-sn-glycero-3-phosphocholine + (24S)-hydroxycholesterol = (24S)-24-hydroxycholesterol ester + 1-hexadecanoyl-sn-glycero-3-phosphocholine. The catalysed reaction is (24S)-hydroxycholesterol + 1-hexadecanoyl-2-(9Z,12Z-octadecadienoyl)-sn-glycero-3-phosphocholine = (24S)-hydroxycholesterol 3-linoleoate + 1-hexadecanoyl-sn-glycero-3-phosphocholine. The enzyme catalyses 1-hexadecanoyl-2-(8Z,11Z,14Z-eicosatrienoyl)-sn-glycero-3-phosphocholine + cholesterol = cholesteryl (8Z,11Z,14Z)-eicosatrienoate + 1-hexadecanoyl-sn-glycero-3-phosphocholine. It carries out the reaction 1-hexadecanoyl-2-(5Z,8Z,11Z-eicosatrienoyl)-sn-glycero-3-phosphocholine + cholesterol = cholesteryl (5Z,8Z,11Z)-eicosatrienoate + 1-hexadecanoyl-sn-glycero-3-phosphocholine. It catalyses the reaction 1-hexadecanoyl-2-(5Z,8Z,11Z,14Z,17Z-eicosapentaenoyl)-sn-glycero-3-phosphocholine + cholesterol = (5Z,8Z,11Z,14Z,17Z-eicosapentaenoyl)-cholesterol + 1-hexadecanoyl-sn-glycero-3-phosphocholine. The catalysed reaction is 1-hexadecanoyl-2-(9Z,12Z-octadecadienoyl)-sn-glycero-3-phosphocholine + cholesterol = cholesteryl (9Z,12Z)-octadecadienoate + 1-hexadecanoyl-sn-glycero-3-phosphocholine. The enzyme catalyses 1-hexadecanoyl-2-(6Z,9Z,12Z-octadecatrienoyl)-sn-glycero-3-phosphocholine + cholesterol = (6Z,9Z,12Z-octadecatrienoyl)-cholesterol + 1-hexadecanoyl-sn-glycero-3-phosphocholine. It carries out the reaction 1-hexadecanoyl-2-(11Z,14Z,17Z-eicosatrienoyl)-sn-glycero-3-phosphocholine + cholesterol = (11Z,14Z,17Z-eicosatrienoyl)-cholesterol + 1-hexadecanoyl-sn-glycero-3-phosphocholine. It catalyses the reaction 1-hexadecanoyl-2-(9Z,12Z,15Z-octadecatrienoyl)-sn-glycero-3-phosphocholine + cholesterol = (9Z,12Z,15Z-octadecatrienoyl)-cholesterol + 1-hexadecanoyl-sn-glycero-3-phosphocholine. The catalysed reaction is a 1-O-alkyl-2-acetyl-sn-glycero-3-phosphocholine + 1-hexadecanoyl-sn-glycero-3-phosphocholine = 1-hexadecanoyl-2-acetyl-sn-glycero-3-phosphocholine + a 1-O-alkyl-sn-glycero-3-phosphocholine. Its function is as follows. Central enzyme in the extracellular metabolism of plasma lipoproteins. Synthesized mainly in the liver and secreted into plasma where it converts cholesterol and phosphatidylcholines (lecithins) to cholesteryl esters and lysophosphatidylcholines on the surface of high and low density lipoproteins (HDLs and LDLs). The cholesterol ester is then transported back to the liver. Also produced in the brain by primary astrocytes, and esterifies free cholesterol on nascent APOE-containing lipoproteins secreted from glia and influences cerebral spinal fluid (CSF) APOE- and APOA1 levels. Together with APOE and the cholesterol transporter ABCA1, plays a key role in the maturation of glial-derived, nascent lipoproteins. Required for remodeling high-density lipoprotein particles into their spherical forms. Has a preference for plasma 16:0-18:2 or 18:O-18:2 phosphatidylcholines. Catalyzes the hydrolysis of 1-O-alkyl-2-acetyl-sn-glycero-3-phosphocholine (platelet-activating factor or PAF) to 1-O-alkyl-sn-glycero-3-phosphocholine (lyso-PAF). Also catalyzes the transfer of the acetate group from PAF to 1-hexadecanoyl-sn-glycero-3-phosphocholine forming lyso-PAF. Catalyzes the esterification of (24S)-hydroxycholesterol (24(S)OH-C), also known as cerebrosterol to produce 24(S)OH-C monoesters. The sequence is that of Phosphatidylcholine-sterol acyltransferase (Lcat) from Rattus norvegicus (Rat).